We begin with the raw amino-acid sequence, 214 residues long: UPF0502 protein Acid345_3645 (214 aa).

Belongs to the UPF0502 family.

The sequence is that of UPF0502 protein Acid345_3645 from Koribacter versatilis (strain Ellin345).